A 263-amino-acid chain; its full sequence is uncharacterized protein (263 aa).

An N-terminal signal peptide occupies residues 1–22 (MGYLKRLVLYIVIMVMSVFIIG). The N-palmitoyl cysteine moiety is linked to residue cysteine 23. Cysteine 23 carries the S-diacylglycerol cysteine lipid modification.

This sequence belongs to the staphylococcal tandem lipoprotein family.

It is found in the cell membrane. This is an uncharacterized protein from Staphylococcus aureus (strain N315).